Consider the following 828-residue polypeptide: Vacuolar transporter chaperone complex subunit 2 (828 aa).

An SPX domain is found at 1–146 (MLFGVKLANE…PKYPSVKSLL (146 aa)). Residues 1-693 (MLFGVKLANE…EAKVWLANER (693 aa)) lie on the Cytoplasmic side of the membrane. Positions 127–134 (KIVKKHDK) are important for inositol polyphosphate binding. A phosphoserine mark is found at serine 182, serine 187, serine 196, serine 264, serine 583, serine 615, and serine 616. A disordered region spans residues 580–636 (RRLSNLKEPQHQAAVPVSQEENERITSQGDLEADGSSDEETEQEPHSKRSKKVRRRK). Residues 610 to 621 (LEADGSSDEETE) are compositionally biased toward acidic residues. Threonine 620 carries the phosphothreonine modification. Serine 626 bears the Phosphoserine mark. Basic residues predominate over residues 627 to 636 (KRSKKVRRRK). Serine 657 carries the phosphoserine modification. The chain crosses the membrane as a helical span at residues 694–716 (TFNRWLSVTSLLSVLTFSIYNSV). The Vacuolar segment spans residues 717 to 727 (KKAEYPTLANY). A helical transmembrane segment spans residues 728 to 748 (MAYVYFGLTIFCALWSYSIYM). The Cytoplasmic segment spans residues 749–766 (KRVDIIQQRSGQHLDAPL). The chain crosses the membrane as a helical span at residues 767–787 (GPVLVSIVLFVTLVVNFVMAF). The Vacuolar portion of the chain corresponds to 788–828 (RNAAKSRQELQIQNLEVPERIPEVLRPLQNYLFKLMGPSSD).

This sequence belongs to the VTC2/3 family. The VTC core complex is an integral membrane heterooligomer composed of the catalytic subunit VTC4 and the accessory subunits VTC1, VTC2 and VTC3. The complex exists in 2 different sub-complexes: VTC1-VTC2-VCT4 and VCT1-VTC3-VTC4. The VCT1-VTC3-VTC4 subcomplex is mostly found on the vacuolar membrane. The VTC1-VTC2-VCT4 subcomplex is observed in the cell periphery, probably ER and nuclear envelope, but localizes to the vacuole under phosphate starvation. Each subunit contains 3 transmembrane helices. VTC1 is a small membrane protein without hydrophilic domain. VTC2, VTC3 and VTC4 are related and have 2 hydrophilic domains that face the cytosol, an N-terminal SPX domain and the central core domain. The central core in VTC4 is the catalytic domain, with the essential catalytic lysine replaced by isoleucine and leucine in VTC2 and VTC3, respectively. The core complex associates with the accessory subunit VTC5. The complex interacts with the v-SNARE NYV1 and with the V(0) subunit of V-ATPase VPH1.

The protein resides in the vacuole membrane. The protein localises to the cytoplasm. It is found in the cell cortex. Its subcellular location is the endoplasmic reticulum membrane. It localises to the cytoplasmic vesicle. The protein resides in the autophagosome membrane. Functionally, accessory subunit of the vacuolar transporter chaperone (VTC) complex. The VTC complex acts as a vacuolar polyphosphate polymerase that catalyzes the synthesis of inorganic polyphosphate (polyP) via transfer of phosphate from ATP to a growing polyP chain, releasing ADP. VTC exposes its catalytic domain VTC4 to the cytosol, where the growing polyP chain winds through a tunnel-shaped pocket, integrating cytoplasmic polymer synthesis with polyP membrane translocation. The VTC complex carries 9 vacuolar transmembrane domains, which are likely to constitute the translocation channel into the organelle lumen. PolyP synthesis is tightly coupled to its transport into the vacuole lumen, in order to avoid otherwise toxic intermediates in the cytosol, and it depends on the proton gradient across the membrane, formed by V-ATPase. Binds inositol hexakisphosphate (Ins6P) and similar inositol polyphosphates, such as 5-diphospho-inositol pentakisphosphate (5-InsP7); these are important intracellular signaling molecules. Inositol polyphosphate binding promotes vacuolar polyphosphate synthesis. The VTC complex also plays a role in vacuolar membrane fusion. Required for SEC18/NSF activity in SNARE priming, membrane binding of LMA1 and V(0) trans-complex formation. The chain is Vacuolar transporter chaperone complex subunit 2 from Saccharomyces cerevisiae (strain ATCC 204508 / S288c) (Baker's yeast).